Consider the following 1221-residue polypeptide: Adhesion G-protein coupled receptor G6 (1221 aa).

The first 37 residues, 1-37, serve as a signal peptide directing secretion; that stretch reads MMFRSDRMWSCHWKWKPSPLLFLFALYIMCVPHSVWG. Over 38 to 862 the chain is Extracellular; it reads CANCRVVLSN…ASQLDARNTK (825 aa). Residues Cys41 and Cys67 are joined by a disulfide bond. Residues 41–149 enclose the CUB domain; it reads CRVVLSNPSG…KGFNASYIRV (109 aa). Ca(2+)-binding residues include Glu89 and Asp97. Cys94 and Cys111 are oxidised to a cystine. Asn121 carries an N-linked (GlcNAc...) asparagine glycan. Ca(2+) is bound by residues Asp134, Ser136, and Ile137. N-linked (GlcNAc...) asparagine glycans are attached at residues Asn143, Asn206, Asn258, Asn314, Asn324, Asn353, Asn438, Asn445, Asn452, Asn485, Asn488, and Asn505. The Pentraxin (PTX) domain maps to 154–356; sequence RNQKVILPQT…ALKAESNLSC (203 aa). 2 disulfides stabilise this stretch: Cys186-Cys254 and Cys231-Cys277. A mediates interaction with laminin-2 region spans residues 473–837; the sequence is EPRLVLWALL…SDASETVCLC (365 aa). Intrachain disulfides connect Cys525/Cys560 and Cys548/Cys580. N-linked (GlcNAc...) asparagine glycosylation is found at Asn563, Asn593, Asn600, Asn605, Asn667, Asn673, Asn695, Asn704, Asn750, Asn776, Asn811, and Asn818. The region spanning 670 to 853 is the GAIN-B domain; the sequence is SHVNITTRNL…GVLMDLPRSA (184 aa). 2 cysteine pairs are disulfide-bonded: Cys803–Cys835 and Cys822–Cys837. Residues 803 to 853 form a GPS region; the sequence is CAFWDLNKNKSFGGWNTSGCVAHRDSDASETVCLCNHFTHFGVLMDLPRSA. Residues 842-850 are stachel; the sequence is HFGVLMDLP. A helical membrane pass occupies residues 863–883; sequence VLTFISYIGCGISAIFSAATL. The Cytoplasmic portion of the chain corresponds to 884–903; it reads LTYVAFEKLRRDYPSKILMN. A helical transmembrane segment spans residues 904–924; it reads LSTALLFLNLLFLLDGWITSF. Over 925–929 the chain is Extracellular; sequence NVDGL. Residues 930-950 traverse the membrane as a helical segment; sequence CIAVAVLLHFFLLATFTWMGL. Residues 951 to 970 lie on the Cytoplasmic side of the membrane; that stretch reads EAIHMYIALVKVFNTYIRRY. Residues 971–991 form a helical membrane-spanning segment; sequence ILKFCIIGWGLPALVVSVVLA. Residues 992 to 1024 are Extracellular-facing; that stretch reads SRNNNEVYGKESYGKEKGDEFCWIQDPVIFYVT. A helical transmembrane segment spans residues 1025–1045; sequence CAGYFGVMFFLNIAMFIVVMV. Topologically, residues 1046 to 1069 are cytoplasmic; the sequence is QICGRNGKRSNRTLREEVLRNLRS. The helical transmembrane segment at 1070–1090 threads the bilayer; sequence VVSLTFLLGMTWGFAFFAWGP. Topologically, residues 1091–1092 are extracellular; the sequence is LN. Residues 1093 to 1113 traverse the membrane as a helical segment; sequence IPFMYLFSIFNSLQGLFIFIF. 17alpha-hydroxyprogesterone is bound at residue Asn1103. The Cytoplasmic portion of the chain corresponds to 1114–1221; that stretch reads HCAMKENVQK…GQVLVKTGPC (108 aa). Residues 1156–1176 form a disordered region; sequence NLGKSLSSSSIGSNSTYLTSK. A phosphoserine mark is found at Ser1165 and Ser1168.

Belongs to the G-protein coupled receptor 2 family. Adhesion G-protein coupled receptor (ADGR) subfamily. In terms of assembly, heterodimer of 2 chains generated by proteolytic processing; the large extracellular N-terminal fragment and the membrane-bound C-terminal fragment predominantly remain associated and non-covalently linked. Interacts with Laminin-2; this interaction stabilizes the receptor in an inactive state. Laminin-2 polymerization could facilitate ADGRG6-NTF removal, thereby exposing the tethered agonist to drive myelination. Interacts with PRNP. Interacts with ITGB1. Interacts with LRP1. Post-translationally, proteolytically cleaved into 2 conserved sites: one in the GPS region of the GAIN-B domain (S1 site) and the other in the middle of the extracellular domain (S2 site). The proteolytic cleavage at S1 site generates an extracellular subunit and a seven-transmembrane subunit. Furin is involved in the cleavage of the S2 site generating a soluble fragment. Processing at the GPS region occurred independent of and probably prior to the cleavage at the S2 site. Proteolytic cleavage is required for activation of the receptor. Highly glycosylated. Expressed in placenta and to a lower extent in pancreas and liver. Detected in aortic endothelial cells but not in skin microvascular endothelial cells.

Its subcellular location is the cell membrane. Its activity is regulated as follows. Forms a heterodimer of 2 chains generated by proteolytic processing that remain associated through non-covalent interactions mediated by the GAIN-B domain. In the inactivated receptor, the Stachel sequence (also named stalk) is embedded in the GAIN-B domain, where it adopts a beta-strand conformation. On activation, the Stachel moves into the 7 transmembrane region and adopts a twisted hook-shaped configuration that forms contacts within the receptor, leading to coupling of a G-alpha protein, which activates signaling. The cleaved GAIN-B and N-terminal domains can then dissociate from the rest of the receptor. Its function is as follows. Adhesion G-protein coupled receptor (aGPCR) for steroid hormones, such as progesterone and 17alpha-hydroxyprogesterone (17OHP). Involved in many biological processes, such as myelination, sprouting angiogenesis, placenta, ear and cartilage development. Ligand binding causes a conformation change that triggers signaling via guanine nucleotide-binding proteins (G proteins) and modulates the activity of downstream effectors, such as adenylate cyclase. ADGRG6 is coupled to G(i) G alpha proteins and mediates inhibition of adenylate cyclase. Also able to couple to G(q) G proteins. Involved in myelination of the peripheral nervous system: required for differentiation of promyelinating Schwann cells and for normal myelination of axons. Also acts as a regulator of body length and bone mass. Acts as a regulator of blood-brain barrier formation in the central nervous system vie its association with LRP1 and ITGB1. The polypeptide is Adhesion G-protein coupled receptor G6 (Homo sapiens (Human)).